The chain runs to 734 residues: Putative protocadherin beta-18 (734 aa).

Cadherin domains follow at residues 1-79 (MWKT…TPTF), 80-188 (LNNH…APEF), 189-293 (EKPV…PPEI), 294-398 (AMTS…APIF), and 399-508 (TQTS…SPFV). Asn115 carries N-linked (GlcNAc...) asparagine glycosylation. 2 N-linked (GlcNAc...) asparagine glycosylation sites follow: Asn365 and Asn383. The N-linked (GlcNAc...) asparagine glycan is linked to Asn514. Residues 515–621 (GSAPCTELVP…GFSQPYLPLT (107 aa)) form the Cadherin 6 domain. The helical transmembrane segment at 638 to 658 (VVALASVSSLFLFSVFLFVAV) threads the bilayer.

The protein resides in the cell membrane. Potential calcium-dependent cell-adhesion protein. This chain is Putative protocadherin beta-18 (PCDHB18P), found in Homo sapiens (Human).